We begin with the raw amino-acid sequence, 359 residues long: Ferredoxin--NADP reductase (359 aa).

FAD-binding residues include aspartate 48, glutamine 56, tyrosine 61, alanine 101, phenylalanine 139, aspartate 304, and serine 345. The tract at residues 340 to 359 is disordered; it reads VHTHTSNDTNLQSRLHAAAE. Polar residues predominate over residues 341–352; it reads HTHTSNDTNLQS.

Belongs to the ferredoxin--NADP reductase type 2 family. In terms of assembly, homodimer. It depends on FAD as a cofactor.

The catalysed reaction is 2 reduced [2Fe-2S]-[ferredoxin] + NADP(+) + H(+) = 2 oxidized [2Fe-2S]-[ferredoxin] + NADPH. This Ralstonia nicotianae (strain ATCC BAA-1114 / GMI1000) (Ralstonia solanacearum) protein is Ferredoxin--NADP reductase.